A 313-amino-acid polypeptide reads, in one-letter code: Homoserine O-succinyltransferase (313 aa).

Cysteine 142 functions as the Acyl-thioester intermediate in the catalytic mechanism. Substrate contacts are provided by lysine 163 and serine 192. Histidine 235 (proton acceptor) is an active-site residue. Glutamate 237 is an active-site residue. Residue arginine 249 coordinates substrate.

It belongs to the MetA family.

The protein localises to the cytoplasm. It catalyses the reaction L-homoserine + succinyl-CoA = O-succinyl-L-homoserine + CoA. Its pathway is amino-acid biosynthesis; L-methionine biosynthesis via de novo pathway; O-succinyl-L-homoserine from L-homoserine: step 1/1. Its function is as follows. Transfers a succinyl group from succinyl-CoA to L-homoserine, forming succinyl-L-homoserine. In Vibrio campbellii (strain ATCC BAA-1116), this protein is Homoserine O-succinyltransferase.